Consider the following 121-residue polypeptide: Large ribosomal subunit protein bL19 (121 aa).

This sequence belongs to the bacterial ribosomal protein bL19 family.

Its function is as follows. This protein is located at the 30S-50S ribosomal subunit interface and may play a role in the structure and function of the aminoacyl-tRNA binding site. The polypeptide is Large ribosomal subunit protein bL19 (Borreliella burgdorferi (strain ZS7) (Borrelia burgdorferi)).